A 79-amino-acid polypeptide reads, in one-letter code: Tau-theraphotoxin-Hs1a (79 aa).

Cystine bridges form between Cys2–Cys16, Cys9–Cys23, Cys15–Cys31, Cys44–Cys58, Cys51–Cys63, and Cys57–Cys71. Domain repeat units follow at residues 2–31 (CAKEGEVCSWGKKCCDLDNFYCPMEFIPHC) and 42–71 (TNCAKEGEVCGWGSKCCHGLDCPLAFIPYC). Residues 2–71 (CAKEGEVCSW…DCPLAFIPYC (70 aa)) form a 2 X approximate repeats with cysteine pattern C-C-CC-C-C region.

The protein belongs to the neurotoxin 23 family. Double-knot toxin subfamily. Interacts with TRPV1 (2 toxins (4 moieties) bind 1 channel (homotetramer)). Expressed by the venom gland.

Its subcellular location is the secreted. In terms of biological role, selectively activates the heat-activated TRPV1 channel. It binds to TRPV1 in an open state-dependent manner, trapping it there to produce irreversible currents. It binds to the outer edge of the external pore of TRPV1 in a counterclockwise configuration, using a limited protein-protein interface and inserting hydrophobic residues into the bilayer. It also partitions naturally into membranes, with the two lobes exhibiting opposing energetics for membrane partitioning (K1) and channel activation (K2). In addition, the toxin disrupts a cluster of hydrophobic residues behind the selectivity filter that are critical for channel activation. This chain is Tau-theraphotoxin-Hs1a, found in Cyriopagopus schmidti (Chinese bird spider).